The following is a 395-amino-acid chain: Phosphoglycerate kinase (395 aa).

Residues 21-23, R36, 59-62, R113, and R146 each bind substrate; these read DLN and HLGR. ATP contacts are provided by residues K197, E324, and 350 to 353; that span reads GGDT.

Belongs to the phosphoglycerate kinase family. In terms of assembly, monomer.

It is found in the cytoplasm. The catalysed reaction is (2R)-3-phosphoglycerate + ATP = (2R)-3-phospho-glyceroyl phosphate + ADP. It functions in the pathway carbohydrate degradation; glycolysis; pyruvate from D-glyceraldehyde 3-phosphate: step 2/5. In Acinetobacter baumannii (strain AB307-0294), this protein is Phosphoglycerate kinase.